Reading from the N-terminus, the 156-residue chain is Small ribosomal subunit protein uS7 (156 aa).

This sequence belongs to the universal ribosomal protein uS7 family. In terms of assembly, part of the 30S ribosomal subunit. Contacts proteins S9 and S11.

One of the primary rRNA binding proteins, it binds directly to 16S rRNA where it nucleates assembly of the head domain of the 30S subunit. Is located at the subunit interface close to the decoding center, probably blocks exit of the E-site tRNA. The polypeptide is Small ribosomal subunit protein uS7 (Enterobacter sp. (strain 638)).